A 299-amino-acid polypeptide reads, in one-letter code: Homoserine O-acetyltransferase (299 aa).

Cysteine 142 serves as the catalytic Acyl-thioester intermediate. Lysine 163 and serine 192 together coordinate substrate. Residue histidine 235 is the Proton acceptor of the active site. Glutamate 237 is a catalytic residue. Arginine 249 is a binding site for substrate.

The protein belongs to the MetA family.

It is found in the cytoplasm. The enzyme catalyses L-homoserine + acetyl-CoA = O-acetyl-L-homoserine + CoA. The protein operates within amino-acid biosynthesis; L-methionine biosynthesis via de novo pathway; O-acetyl-L-homoserine from L-homoserine: step 1/1. Transfers an acetyl group from acetyl-CoA to L-homoserine, forming acetyl-L-homoserine. The chain is Homoserine O-acetyltransferase from Synechococcus elongatus (strain ATCC 33912 / PCC 7942 / FACHB-805) (Anacystis nidulans R2).